The sequence spans 133 residues: Small ribosomal subunit protein bS18 (133 aa).

A disordered region spans residues 1–63 (MARPDMGGPK…GDEGGGRRGF (63 aa)). Gly residues predominate over residues 9–39 (PKTGGFGGPRSGGFGGGGGGGFGGGGFGGGR). Residues 40 to 59 (GGDRGDRGDRDDRGGDEGGG) are compositionally biased toward basic and acidic residues.

The protein belongs to the bacterial ribosomal protein bS18 family. In terms of assembly, part of the 30S ribosomal subunit. Forms a tight heterodimer with protein bS6.

Binds as a heterodimer with protein bS6 to the central domain of the 16S rRNA, where it helps stabilize the platform of the 30S subunit. The sequence is that of Small ribosomal subunit protein bS18 from Anaeromyxobacter dehalogenans (strain 2CP-1 / ATCC BAA-258).